The sequence spans 139 residues: D-ribose pyranase (139 aa).

Residue histidine 20 is the Proton donor of the active site. Substrate-binding positions include aspartate 28, histidine 106, and 128–130 (YAN).

It belongs to the RbsD / FucU family. RbsD subfamily. In terms of assembly, homodecamer.

It localises to the cytoplasm. The enzyme catalyses beta-D-ribopyranose = beta-D-ribofuranose. Its pathway is carbohydrate metabolism; D-ribose degradation; D-ribose 5-phosphate from beta-D-ribopyranose: step 1/2. In terms of biological role, catalyzes the interconversion of beta-pyran and beta-furan forms of D-ribose. The sequence is that of D-ribose pyranase from Aliivibrio fischeri (strain ATCC 700601 / ES114) (Vibrio fischeri).